The following is a 154-amino-acid chain: 6,7-dimethyl-8-ribityllumazine synthase (154 aa).

Residues Phe22, 56 to 58, and 81 to 83 contribute to the 5-amino-6-(D-ribitylamino)uracil site; these read SFE and VLI. 86 to 87 serves as a coordination point for (2S)-2-hydroxy-3-oxobutyl phosphate; it reads ET. His89 (proton donor) is an active-site residue. Phe114 provides a ligand contact to 5-amino-6-(D-ribitylamino)uracil. Residue Arg128 coordinates (2S)-2-hydroxy-3-oxobutyl phosphate.

The protein belongs to the DMRL synthase family.

The enzyme catalyses (2S)-2-hydroxy-3-oxobutyl phosphate + 5-amino-6-(D-ribitylamino)uracil = 6,7-dimethyl-8-(1-D-ribityl)lumazine + phosphate + 2 H2O + H(+). It participates in cofactor biosynthesis; riboflavin biosynthesis; riboflavin from 2-hydroxy-3-oxobutyl phosphate and 5-amino-6-(D-ribitylamino)uracil: step 1/2. Functionally, catalyzes the formation of 6,7-dimethyl-8-ribityllumazine by condensation of 5-amino-6-(D-ribitylamino)uracil with 3,4-dihydroxy-2-butanone 4-phosphate. This is the penultimate step in the biosynthesis of riboflavin. This chain is 6,7-dimethyl-8-ribityllumazine synthase, found in Chlamydia caviae (strain ATCC VR-813 / DSM 19441 / 03DC25 / GPIC) (Chlamydophila caviae).